Here is a 161-residue protein sequence, read N- to C-terminus: SsrA-binding protein (161 aa).

The protein belongs to the SmpB family.

It is found in the cytoplasm. Its function is as follows. Required for rescue of stalled ribosomes mediated by trans-translation. Binds to transfer-messenger RNA (tmRNA), required for stable association of tmRNA with ribosomes. tmRNA and SmpB together mimic tRNA shape, replacing the anticodon stem-loop with SmpB. tmRNA is encoded by the ssrA gene; the 2 termini fold to resemble tRNA(Ala) and it encodes a 'tag peptide', a short internal open reading frame. During trans-translation Ala-aminoacylated tmRNA acts like a tRNA, entering the A-site of stalled ribosomes, displacing the stalled mRNA. The ribosome then switches to translate the ORF on the tmRNA; the nascent peptide is terminated with the 'tag peptide' encoded by the tmRNA and targeted for degradation. The ribosome is freed to recommence translation, which seems to be the essential function of trans-translation. This chain is SsrA-binding protein, found in Haemophilus influenzae (strain 86-028NP).